Consider the following 696-residue polypeptide: Methionine--tRNA ligase (696 aa).

The short motif at 12 to 22 (PYANGAIHLGH) is the 'HIGH' region element. Residues C143, C146, C156, and C159 each contribute to the Zn(2+) site. The 'KMSKS' region signature appears at 336 to 340 (KMSKS). K339 contributes to the ATP binding site. The disordered stretch occupies residues 556 to 580 (SLAPAPEAQSQQRHAEHQQNEVTAE). A tRNA-binding domain is found at 591-696 (DFMKVDLRIV…SGAQPGMRVK (106 aa)).

It belongs to the class-I aminoacyl-tRNA synthetase family. MetG type 1 subfamily. In terms of assembly, homodimer. Zn(2+) is required as a cofactor.

It localises to the cytoplasm. The catalysed reaction is tRNA(Met) + L-methionine + ATP = L-methionyl-tRNA(Met) + AMP + diphosphate. Its function is as follows. Is required not only for elongation of protein synthesis but also for the initiation of all mRNA translation through initiator tRNA(fMet) aminoacylation. The polypeptide is Methionine--tRNA ligase (Dechloromonas aromatica (strain RCB)).